Consider the following 260-residue polypeptide: Outer membrane protein assembly factor BamD (260 aa).

The first 19 residues, methionine 1–alanine 19, serve as a signal peptide directing secretion. A lipid anchor (N-palmitoyl cysteine) is attached at cysteine 20. The S-diacylglycerol cysteine moiety is linked to residue cysteine 20.

The protein belongs to the BamD family. As to quaternary structure, part of the Bam complex.

It localises to the cell outer membrane. Functionally, part of the outer membrane protein assembly complex, which is involved in assembly and insertion of beta-barrel proteins into the outer membrane. The chain is Outer membrane protein assembly factor BamD from Pasteurella multocida (strain Pm70).